Reading from the N-terminus, the 209-residue chain is MIAIIDYGMGNIRSVEQALKYIGAAYIVTSDKEEIFRSDGVILPGVGAFPKAMDILEEKDLVRMLQEIGRSRKPLLGICLGMQLLFEKSEELQDCNGLSLLPGVIRKLKVPYKIPHMGWNELKKEGEIALWNGVEDGSFVYYVHSYYADCPNEIVYGISDYGVKVPGFVAKGNIYGAQFHPEKSGDIGMQMLKNFKGVVETWKSSQLSI.

The region spanning 1–205 (MIAIIDYGMG…KGVVETWKSS (205 aa)) is the Glutamine amidotransferase type-1 domain. Cysteine 79 serves as the catalytic Nucleophile. Active-site residues include histidine 180 and glutamate 182.

In terms of assembly, heterodimer of HisH and HisF.

Its subcellular location is the cytoplasm. The enzyme catalyses 5-[(5-phospho-1-deoxy-D-ribulos-1-ylimino)methylamino]-1-(5-phospho-beta-D-ribosyl)imidazole-4-carboxamide + L-glutamine = D-erythro-1-(imidazol-4-yl)glycerol 3-phosphate + 5-amino-1-(5-phospho-beta-D-ribosyl)imidazole-4-carboxamide + L-glutamate + H(+). It catalyses the reaction L-glutamine + H2O = L-glutamate + NH4(+). Its pathway is amino-acid biosynthesis; L-histidine biosynthesis; L-histidine from 5-phospho-alpha-D-ribose 1-diphosphate: step 5/9. Its function is as follows. IGPS catalyzes the conversion of PRFAR and glutamine to IGP, AICAR and glutamate. The HisH subunit catalyzes the hydrolysis of glutamine to glutamate and ammonia as part of the synthesis of IGP and AICAR. The resulting ammonia molecule is channeled to the active site of HisF. The chain is Imidazole glycerol phosphate synthase subunit HisH from Bacillus anthracis (strain CDC 684 / NRRL 3495).